A 661-amino-acid polypeptide reads, in one-letter code: Tegument protein UL46 homolog (661 aa).

The segment at 1–31 (MFSRFARSFSSDDRTRKSYDGSYQSFNAGER) is disordered. The span at 10-19 (SSDDRTRKSY) shows a compositional bias: basic and acidic residues. A run of 2 helical transmembrane segments spans residues 299–319 (AGTG…TALL) and 339–359 (AAIV…QYLI).

The protein belongs to the herpesviridae HHV-1 VP11/12 protein family. Phosphorylated by host LCK. The phosphorylation seems to be lymphocyte-specific.

The protein resides in the virion tegument. The protein localises to the host cytoplasm. It localises to the host membrane. Plays a role in the activation of the host PI3K/AKT pathway to promote cell survival. Interacts with and activates PI3KR1 in order to phosphorylate host AKT on its activating residues. Activates the host AP-1 pathway by triggering phosphorylation of host ERK1/2. Participates in host BIM and BAD phosphorylation, leading to apoptosis inhibition. This Varicella-zoster virus (strain Oka vaccine) (HHV-3) protein is Tegument protein UL46 homolog.